Reading from the N-terminus, the 418-residue chain is Putative F-box protein At1g20795 (418 aa).

The region spanning 1 to 46 (METLGLPLPLFEKILFRLDPISLVMMKCTRRSFNSHISEDPYFKSK) is the F-box domain.

This Arabidopsis thaliana (Mouse-ear cress) protein is Putative F-box protein At1g20795.